A 567-amino-acid chain; its full sequence is ETHYLENE INSENSITIVE 3-like 3 protein (567 aa).

A coiled-coil region spans residues 24-44; it reads NVAEIDVSDEEIDADDLERRM. Disordered stretches follow at residues 55-81 and 286-393; these read KERQ…AQRK and IQQP…RNIL. Basic and acidic residues predominate over residues 69-79; sequence ETPKKISDQAQ. Residues 162–288 mediate DNA binding; the sequence is SQFVLQDLQD…LNQEESLIQQ (127 aa). The span at 286-299 shows a compositional bias: polar residues; it reads IQQPSSDNGNSNVT. Over residues 300–312 the composition is skewed to basic and acidic residues; sequence ETHRRGNNADRRK. A compositionally biased stretch (basic residues) spans 363–372; that stretch reads KHRRRKRPRI.

This sequence belongs to the EIN3 family. As to quaternary structure, interacts with MYB72.

It is found in the nucleus. Its function is as follows. Probable transcription factor that may be involved in the ethylene response pathway. In Arabidopsis thaliana (Mouse-ear cress), this protein is ETHYLENE INSENSITIVE 3-like 3 protein (EIL3).